Consider the following 183-residue polypeptide: Macro domain-containing protein (183 aa).

One can recognise a Macro domain in the interval 1–174 (MKKVHLIQAD…IYKNILSNID (174 aa)).

The protein belongs to the MacroD-type family.

The protein is Macro domain-containing protein of Acinetobacter sp. (strain ED45-25).